Reading from the N-terminus, the 208-residue chain is Cysteine-rich protein 2 (208 aa).

The LIM zinc-binding 1 domain maps to 5-57; that stretch reads CPKCDKTVYFAEKVSSLGKDWHKFCLKCERCNKTLTPGGHAEHDGKPFCHKPC. K23 is subject to N6-acetyllysine. The residue at position 104 (S104) is a Phosphoserine. The LIM zinc-binding 2 domain maps to 126–178; that stretch reads CPRCNKRVYFAEKVTSLGKDWHRPCLRCERCSKTLTPGGHAEHDGQPYCHKPC. Residues K138 and K144 each carry the N6-acetyllysine modification.

As to quaternary structure, interacts with TGFB1I1.

In Mus musculus (Mouse), this protein is Cysteine-rich protein 2 (Crip2).